Reading from the N-terminus, the 254-residue chain is PHD finger protein ALFIN-LIKE 8 (254 aa).

The interval 137–194 (GTAKKQSKEKTPKTSGKSNKSGTKPSRQPEPNSRGPKMPPPKDEDDSGGEEEEEEEDH) is disordered. Over residues 149-162 (KTSGKSNKSGTKPS) the composition is skewed to low complexity. Residues 179 to 194 (DEDDSGGEEEEEEEDH) are compositionally biased toward acidic residues. The PHD-type zinc finger occupies 196-248 (NTLCGACGDNYGQDEFWICCDACETWFHGKCVKITPAKAEHIKHYKCPNCSSS).

Belongs to the Alfin family. Interacts with H3K4me3 and to a lesser extent with H3K4me2.

It localises to the nucleus. Functionally, histone-binding component that specifically recognizes H3 tails trimethylated on 'Lys-4' (H3K4me3), which mark transcription start sites of virtually all active genes. This Oryza sativa subsp. japonica (Rice) protein is PHD finger protein ALFIN-LIKE 8.